We begin with the raw amino-acid sequence, 100 residues long: MAKKSMIEREKKRIKLTKKYALKRATLLKKYQTEESFNLKLELHSKIQKLPRNSAKTRIRNRCWKTGRPRGVFRDFGLSRHVFREMAHQCLLPGVTKSSW.

Belongs to the universal ribosomal protein uS14 family. As to quaternary structure, part of the 30S ribosomal subunit.

It localises to the plastid. It is found in the chloroplast. Functionally, binds 16S rRNA, required for the assembly of 30S particles. This chain is Small ribosomal subunit protein uS14c, found in Phaeodactylum tricornutum (strain CCAP 1055/1).